The chain runs to 284 residues: NADH-cytochrome b5 reductase 1 (284 aa).

A helical transmembrane segment spans residues 8 to 28 (PLVIFSTLAAIILAAVAVYVV). Positions 41 to 144 (DVFQKFPLIE…RGPKGFFTYT (104 aa)) constitute an FAD-binding FR-type domain. FAD contacts are provided by residues 124-139 (DSKS…GPKG) and 150-182 (HLGM…KISL).

It belongs to the flavoprotein pyridine nucleotide cytochrome reductase family. In terms of assembly, monomer. Component of the 2-(3-amino-3-carboxypropyl)histidine synthase complex composed of DPH1, DPH2, DPH3 and a NADH-dependent reductase, predominantly CBR1. FAD is required as a cofactor.

It is found in the mitochondrion outer membrane. It carries out the reaction 2 Fe(III)-[cytochrome b5] + NADH = 2 Fe(II)-[cytochrome b5] + NAD(+) + H(+). The catalysed reaction is 2 Fe(3+)-[Dph3] + NADH = 2 Fe(2+)-[Dph3] + NAD(+) + H(+). It functions in the pathway protein modification; peptidyl-diphthamide biosynthesis. Functionally, NADH-dependent reductase for DPH3 and cytochrome b5. Required for the first step of diphthamide biosynthesis, a post-translational modification of histidine which occurs in elongation factor 2. DPH1 and DPH2 transfer a 3-amino-3-carboxypropyl (ACP) group from S-adenosyl-L-methionine (SAM) to a histidine residue, the reaction is assisted by a reduction system comprising DPH3 and a NADH-dependent reductase, predominantly CBR1. By reducing DPH3, also involved in the formation of the tRNA wobble base modification mcm5s 2U (5-methoxycarbonylmethyl-2-thiouridine), mediated by the elongator complex. The cytochrome b5/NADH cytochrome b5 reductase electron transfer system supports the catalytic activity of several sterol biosynthetic enzymes. This is NADH-cytochrome b5 reductase 1 (CBR1) from Meyerozyma guilliermondii (strain ATCC 6260 / CBS 566 / DSM 6381 / JCM 1539 / NBRC 10279 / NRRL Y-324) (Yeast).